The primary structure comprises 171 residues: Endoribonuclease YbeY (171 aa).

Zn(2+)-binding residues include His-126, His-130, and His-136.

This sequence belongs to the endoribonuclease YbeY family. Requires Zn(2+) as cofactor.

It localises to the cytoplasm. Its function is as follows. Single strand-specific metallo-endoribonuclease involved in late-stage 70S ribosome quality control and in maturation of the 3' terminus of the 16S rRNA. This Rhizobium leguminosarum bv. trifolii (strain WSM2304) protein is Endoribonuclease YbeY.